Here is a 265-residue protein sequence, read N- to C-terminus: Tryptophan synthase alpha chain (265 aa).

Catalysis depends on proton acceptor residues E41 and D52.

The protein belongs to the TrpA family. As to quaternary structure, tetramer of two alpha and two beta chains.

The catalysed reaction is (1S,2R)-1-C-(indol-3-yl)glycerol 3-phosphate + L-serine = D-glyceraldehyde 3-phosphate + L-tryptophan + H2O. It functions in the pathway amino-acid biosynthesis; L-tryptophan biosynthesis; L-tryptophan from chorismate: step 5/5. Its function is as follows. The alpha subunit is responsible for the aldol cleavage of indoleglycerol phosphate to indole and glyceraldehyde 3-phosphate. The sequence is that of Tryptophan synthase alpha chain from Bacillus velezensis (strain DSM 23117 / BGSC 10A6 / LMG 26770 / FZB42) (Bacillus amyloliquefaciens subsp. plantarum).